The chain runs to 64 residues: DNA-binding protein 7a (64 aa).

An N6-methyllysine; partial mark is found at Lys5 and Lys7.

The protein belongs to the 7 kDa DNA-binding/endoribonuclease P2 family. As to quaternary structure, homodimer. Post-translationally, lys-5 and Lys-7 were found to be 60% monomethylated. ADP-ribosylated by endogenous proteins in vitro.

Can constrain negative DNA supercoils. May be involved in maintaining the integrity of the genome at high temperature. Has RNA endonuclease activity with a narrow substrate specificity; the cleavage products are 3'-phosphooligonucleotides. The sequence is that of DNA-binding protein 7a (sso7a1) from Saccharolobus solfataricus (strain ATCC 35092 / DSM 1617 / JCM 11322 / P2) (Sulfolobus solfataricus).